The following is a 183-amino-acid chain: Protein US32 (183 aa).

Belongs to the herpesviridae US1 family.

This chain is Protein US32 (US32), found in Homo sapiens (Human).